The chain runs to 643 residues: Extracellular metalloproteinase 4 (643 aa).

Residues 1–18 form the signal peptide; it reads MHGLLLAGLLALPLNVLA. The propeptide occupies 19-254; that stretch reads HPTESHSSGI…VHSVVDYVSA (236 aa). Basic and acidic residues predominate over residues 47–57; that stretch reads TKSDAVPKQDD. The segment at 47–71 is disordered; it reads TKSDAVPKQDDESFTTSSTGDDNVS. Positions 60-71 are enriched in polar residues; that stretch reads FTTSSTGDDNVS. N-linked (GlcNAc...) asparagine glycans are attached at residues N271 and N420. H437 is a binding site for Zn(2+). Residue E438 is part of the active site. H441 contacts Zn(2+). N-linked (GlcNAc...) asparagine glycosylation is found at N510 and N553.

Belongs to the peptidase M36 family. The cofactor is Zn(2+).

The protein localises to the secreted. Its function is as follows. Secreted metalloproteinase probably acting as a virulence factor. This Arthroderma benhamiae (Trichophyton mentagrophytes) protein is Extracellular metalloproteinase 4 (MEP4).